Here is a 423-residue protein sequence, read N- to C-terminus: Putative competence-damage inducible protein (423 aa).

It belongs to the CinA family.

The polypeptide is Putative competence-damage inducible protein (Streptococcus equi subsp. zooepidemicus (strain MGCS10565)).